The primary structure comprises 378 residues: Cytochrome P450 2C15 (378 aa).

Residue Cys323 participates in heme binding.

It belongs to the cytochrome P450 family. Heme serves as cofactor.

Its subcellular location is the endoplasmic reticulum membrane. The protein localises to the microsome membrane. It catalyses the reaction an organic molecule + reduced [NADPH--hemoprotein reductase] + O2 = an alcohol + oxidized [NADPH--hemoprotein reductase] + H2O + H(+). Its function is as follows. Cytochromes P450 are a group of heme-thiolate monooxygenases. In liver microsomes, this enzyme is involved in an NADPH-dependent electron transport pathway. It oxidizes a variety of structurally unrelated compounds, including steroids, fatty acids, and xenobiotics. This Oryctolagus cuniculus (Rabbit) protein is Cytochrome P450 2C15 (CYP2C15).